The primary structure comprises 88 residues: DNA-directed RNA polymerase subunit omega (88 aa).

The protein belongs to the RNA polymerase subunit omega family. As to quaternary structure, the RNAP catalytic core consists of 2 alpha, 1 beta, 1 beta' and 1 omega subunit. When a sigma factor is associated with the core the holoenzyme is formed, which can initiate transcription.

The catalysed reaction is RNA(n) + a ribonucleoside 5'-triphosphate = RNA(n+1) + diphosphate. Promotes RNA polymerase assembly. Latches the N- and C-terminal regions of the beta' subunit thereby facilitating its interaction with the beta and alpha subunits. The polypeptide is DNA-directed RNA polymerase subunit omega (Kineococcus radiotolerans (strain ATCC BAA-149 / DSM 14245 / SRS30216)).